Consider the following 53-residue polypeptide: U1-poneritoxin-Dq5a (53 aa).

Residues 1–23 (MNIRLMFTLIALLVLTVSFSGAN) form the signal peptide. 3 cysteine pairs are disulfide-bonded: Cys25–Cys42, Cys32–Cys47, and Cys41–Cys52.

As to expression, expressed by the venom gland.

It is found in the secreted. Its function is as follows. May have neurotoxic activity. The protein is U1-poneritoxin-Dq5a of Dinoponera quadriceps (South American ant).